A 303-amino-acid chain; its full sequence is MSSEVETQQQQPDALEGKAGQEPAATVGDKKVIATKVLGTVKWFNVRNGYGFINRNDTKEDVFVHQTAIKKNNPRKYLRSVGDGETVEFDVVEGEKGAEAANVTGPEGVPVQGSKYAADRNHYRRYPRRRGPPRNYQQNYQNNESGEKAEENESAPEGDDSNQQRPYHRRRFPPYYSRRPYGRRPQYSNAPVQGEEAEGADSQGTDEQGRPARQNMYRGFRPRFRRGPPRQRQPREEGNEEDKENQGDETQSQPPPQRRYRRNFNYRRRRPENPKSQDGKETKAAETSAENTSTPEAEQGGAE.

Residues 1 to 12 (MSSEVETQQQQP) show a composition bias toward polar residues. The segment at 1–28 (MSSEVETQQQQPDALEGKAGQEPAATVG) is disordered. The CSD domain occupies 39–103 (GTVKWFNVRN…GEKGAEAANV (65 aa)). The segment at 43 to 48 (WFNVRN) is C5-methylcytosine binding. The disordered stretch occupies residues 98–303 (AEAANVTGPE…TPEAEQGGAE (206 aa)). Over residues 122 to 132 (HYRRYPRRRGP) the composition is skewed to basic residues. Composition is skewed to low complexity over residues 133–143 (PRNYQQNYQNN) and 173–187 (PPYYSRRPYGRRPQY). Basic residues-rich tracts occupy residues 220 to 229 (FRPRFRRGPP) and 258 to 270 (RRYRRNFNYRRRR). Basic and acidic residues predominate over residues 271–284 (PENPKSQDGKETKA).

The protein belongs to the YBX1 family.

The protein localises to the cytoplasm. It is found in the nucleus. Its subcellular location is the cytoplasmic granule. It localises to the secreted. The protein resides in the extracellular exosome. The protein localises to the P-body. DNA- and RNA-binding protein involved in various processes, such as translational repression, RNA stabilization, mRNA splicing and transcription regulation. Binds preferentially to the 5'-[CU]CUGCG-3' RNA motif and specifically recognizes mRNA transcripts modified by C5-methylcytosine (m5C). Promotes mRNA stabilization: acts by binding to m5C-containing mRNAs and preventing mRNA decay. Plays a role in the maternal-to-zygotic transition in early embryo by binding to m5C-containing maternal mRNAs and preventing their degradation. Also promotes maternal-to-zygotic transition in oocytes and embryos by promoting translation repression; molecular mechanisms governing translation repression are unknown. Plays a key role in RNA composition of extracellular exosomes by defining the sorting of small non-coding RNAs, such as tRNAs, Y RNAs, Vault RNAs and miRNAs. Probably sorts RNAs in exosomes by recognizing and binding C5-methylcytosine (m5C)-containing RNAs. Acts as a key effector of epidermal progenitors by preventing epidermal progenitor senescence: acts by regulating the translation of a senescence-associated subset of cytokine mRNAs, possibly by binding to m5C-containing mRNAs. Also involved in pre-mRNA alternative splicing regulation: binds to splice sites in pre-mRNA and regulates splice site selection. Also able to bind DNA and regulate transcription. Binds to promoters that contain a Y-box (5'-CTGATTGGCCAA-3'). Promotes separation of DNA strands that contain mismatches or are modified by cisplatin. Has endonucleolytic activity and can introduce nicks or breaks into double-stranded DNA, suggesting a role in DNA repair. The secreted form acts as an extracellular mitogen and stimulates cell migration and proliferation. In Xenopus laevis (African clawed frog), this protein is Y-box-binding protein 1.